The following is a 419-amino-acid chain: Histidine--tRNA ligase (419 aa).

The protein belongs to the class-II aminoacyl-tRNA synthetase family. Homodimer.

Its subcellular location is the cytoplasm. It catalyses the reaction tRNA(His) + L-histidine + ATP = L-histidyl-tRNA(His) + AMP + diphosphate + H(+). The sequence is that of Histidine--tRNA ligase from Trichlorobacter lovleyi (strain ATCC BAA-1151 / DSM 17278 / SZ) (Geobacter lovleyi).